The following is a 127-amino-acid chain: Small ribosomal subunit protein uS11 (127 aa).

The protein belongs to the universal ribosomal protein uS11 family. As to quaternary structure, part of the 30S ribosomal subunit.

In terms of biological role, located on the platform of the 30S subunit. The sequence is that of Small ribosomal subunit protein uS11 from Natronomonas pharaonis (strain ATCC 35678 / DSM 2160 / CIP 103997 / JCM 8858 / NBRC 14720 / NCIMB 2260 / Gabara) (Halobacterium pharaonis).